Consider the following 122-residue polypeptide: Large ribosomal subunit protein uL14 (122 aa).

This sequence belongs to the universal ribosomal protein uL14 family. As to quaternary structure, part of the 50S ribosomal subunit. Forms a cluster with proteins L3 and L19. In the 70S ribosome, L14 and L19 interact and together make contacts with the 16S rRNA in bridges B5 and B8.

Its function is as follows. Binds to 23S rRNA. Forms part of two intersubunit bridges in the 70S ribosome. The sequence is that of Large ribosomal subunit protein uL14 from Enterococcus faecalis (strain ATCC 700802 / V583).